Here is a 176-residue protein sequence, read N- to C-terminus: Ribosome rescue factor SmrB (176 aa).

The region spanning 97–172 is the Smr domain; the sequence is LDMHGMTQQE…GDGALLVLLS (76 aa).

The protein belongs to the SmrB family. In terms of assembly, associates with collided ribosomes, but not with correctly translating polysomes.

In terms of biological role, acts as a ribosome collision sensor. Detects stalled/collided disomes (pairs of ribosomes where the leading ribosome is stalled and a second ribosome has collided with it) and endonucleolytically cleaves mRNA at the 5' boundary of the stalled ribosome. Stalled/collided disomes form a new interface (primarily via the 30S subunits) that binds SmrB. Cleaved mRNA becomes available for tmRNA ligation, leading to ribosomal subunit dissociation and rescue of stalled ribosomes. The chain is Ribosome rescue factor SmrB from Vibrio campbellii (strain ATCC BAA-1116).